A 561-amino-acid chain; its full sequence is Nucleoprotein (561 aa).

Residues 53-237 are binding site for the cap structure m7GTP; that stretch reads MRKDKRSEAD…ITQEPAQINI (185 aa). Mn(2+) contacts are provided by aspartate 380 and glutamate 382. 4 residues coordinate Zn(2+): glutamate 390, cysteine 497, histidine 500, and cysteine 521. Aspartate 525 lines the Mn(2+) pocket.

The protein belongs to the arenaviridae nucleocapsid protein family. As to quaternary structure, homomultimerizes to form the nucleocapsid. Binds to viral genomic RNA. Interacts with glycoprotein G2. Interacts with protein Z; this interaction probably directs the encapsidated genome to budding sites. Interacts with protein L; this interaction does not interfere with Z-L interaction. Interacts with host IKBKE (via Protein kinase domain); the interaction inhibits IKBKE kinase activity.

The protein localises to the virion. Its subcellular location is the host cytoplasm. In terms of biological role, encapsidates the genome, protecting it from nucleases. The encapsidated genomic RNA is termed the nucleocapsid (NC). Serves as template for viral transcription and replication. The increased presence of protein N in host cell does not seem to trigger the switch from transcription to replication as observed in other negative strain RNA viruses. Through the interaction with host IKBKE, strongly inhibits the phosphorylation and nuclear translocation of host IRF3, a protein involved in interferon activation pathway, leading to the inhibition of interferon-beta and IRF3-dependent promoters activation. Also encodes a functional 3'-5' exoribonuclease that degrades preferentially dsRNA substrates and thereby participates in the suppression of interferon induction. The protein is Nucleoprotein of Allpahuayo mammarenavirus (isolate Rat/Peru/CLHP-2472/1997) (ALLV).